The sequence spans 412 residues: Polyferredoxin protein MvhB (412 aa).

4Fe-4S ferredoxin-type domains are found at residues 2–29 (IIVN…VTPE), 30–57 (DVIY…LEDL), 67–96 (GRIV…LDEG), 97–127 (KVKK…VEGI), 138–166 (EGPI…LDKV), 168–197 (GVIE…ISGR), 207–236 (KKFE…PRTS), 238–266 (LTVE…LEVE), 276–305 (EGLV…VVTK), 314–345 (EKVD…LVDM), 357–386 (KRVQ…LTDE), and 385–412 (DEKV…LSLK). [4Fe-4S] cluster is bound by residues cysteine 9, cysteine 12, cysteine 15, and cysteine 19. [4Fe-4S] cluster is bound by residues cysteine 76, cysteine 79, cysteine 82, cysteine 86, cysteine 107, cysteine 110, cysteine 113, cysteine 117, cysteine 146, cysteine 149, cysteine 152, cysteine 156, cysteine 177, cysteine 180, cysteine 183, cysteine 187, cysteine 216, cysteine 219, cysteine 222, cysteine 226, cysteine 246, cysteine 249, cysteine 252, and cysteine 256. [4Fe-4S] cluster is bound by residues cysteine 325, cysteine 328, cysteine 331, cysteine 335, cysteine 366, cysteine 369, cysteine 372, cysteine 376, cysteine 394, cysteine 397, cysteine 400, and cysteine 404.

Requires [4Fe-4S] cluster as cofactor.

The polypeptide is Polyferredoxin protein MvhB (mvhB) (Methanothermobacter thermautotrophicus (strain ATCC 29096 / DSM 1053 / JCM 10044 / NBRC 100330 / Delta H) (Methanobacterium thermoautotrophicum)).